Consider the following 556-residue polypeptide: 2-succinyl-5-enolpyruvyl-6-hydroxy-3-cyclohexene-1-carboxylate synthase (556 aa).

It belongs to the TPP enzyme family. MenD subfamily. As to quaternary structure, homodimer. The cofactor is Mg(2+). Mn(2+) serves as cofactor. Thiamine diphosphate is required as a cofactor.

The enzyme catalyses isochorismate + 2-oxoglutarate + H(+) = 5-enolpyruvoyl-6-hydroxy-2-succinyl-cyclohex-3-ene-1-carboxylate + CO2. It functions in the pathway quinol/quinone metabolism; 1,4-dihydroxy-2-naphthoate biosynthesis; 1,4-dihydroxy-2-naphthoate from chorismate: step 2/7. The protein operates within quinol/quinone metabolism; menaquinone biosynthesis. Its function is as follows. Catalyzes the thiamine diphosphate-dependent decarboxylation of 2-oxoglutarate and the subsequent addition of the resulting succinic semialdehyde-thiamine pyrophosphate anion to isochorismate to yield 2-succinyl-5-enolpyruvyl-6-hydroxy-3-cyclohexene-1-carboxylate (SEPHCHC). This is 2-succinyl-5-enolpyruvyl-6-hydroxy-3-cyclohexene-1-carboxylate synthase from Salmonella heidelberg (strain SL476).